Consider the following 247-residue polypeptide: tRNA pseudouridine synthase A (247 aa).

Catalysis depends on Asp-52, which acts as the Nucleophile. Residue Tyr-113 coordinates substrate.

The protein belongs to the tRNA pseudouridine synthase TruA family. In terms of assembly, homodimer.

It catalyses the reaction uridine(38/39/40) in tRNA = pseudouridine(38/39/40) in tRNA. Functionally, formation of pseudouridine at positions 38, 39 and 40 in the anticodon stem and loop of transfer RNAs. This chain is tRNA pseudouridine synthase A, found in Bartonella tribocorum (strain CIP 105476 / IBS 506).